The sequence spans 189 residues: Peptidyl-tRNA hydrolase (189 aa).

Residue Tyr14 participates in tRNA binding. The Proton acceptor role is filled by His19. 3 residues coordinate tRNA: Tyr64, Asn66, and Asn112.

It belongs to the PTH family. As to quaternary structure, monomer.

The protein resides in the cytoplasm. It carries out the reaction an N-acyl-L-alpha-aminoacyl-tRNA + H2O = an N-acyl-L-amino acid + a tRNA + H(+). Functionally, hydrolyzes ribosome-free peptidyl-tRNAs (with 1 or more amino acids incorporated), which drop off the ribosome during protein synthesis, or as a result of ribosome stalling. In terms of biological role, catalyzes the release of premature peptidyl moieties from peptidyl-tRNA molecules trapped in stalled 50S ribosomal subunits, and thus maintains levels of free tRNAs and 50S ribosomes. The protein is Peptidyl-tRNA hydrolase of Dehalococcoides mccartyi (strain CBDB1).